Reading from the N-terminus, the 1035-residue chain is Kinesin-like protein KIN-4A (1035 aa).

A Kinesin motor domain is found at 10–369 (CVKVAVHVRP…LKYANRARNI (360 aa)). An ATP-binding site is contributed by 89 to 96 (GQTGSGKT). Coiled coils occupy residues 380–437 (VADE…LRNH) and 498–702 (MLQD…RKSS). Disordered regions lie at residues 697–720 (EARK…HMTE), 766–787 (VMSG…NTLS), and 882–928 (HSES…PLSP). 2 stretches are compositionally biased toward polar residues: residues 704–716 (RDNS…SPGS) and 778–787 (NGNSRANTLS). A coiled-coil region spans residues 850–904 (NVAADARCQVREKEMEIKEMKEQMTELVTILRHSESRRRETEKQLKQREQAAVTA). Residues 882 to 898 (HSESRRRETEKQLKQRE) are compositionally biased toward basic and acidic residues. Polar residues predominate over residues 902–926 (VTATTSPGNGNGSVKHSADDSNTPL). A Nuclear localization signal motif is present at residues 971-987 (KKVSIAGQSGKLWRWKR). The disordered stretch occupies residues 1014 to 1035 (DETMTRTRPRPQLLPHRPQRVM).

The protein belongs to the TRAFAC class myosin-kinesin ATPase superfamily. Kinesin family. KIN-4 subfamily. In terms of assembly, homodimer. In terms of tissue distribution, expressed in young tissues with cell divisions, including initiating adventitious roots, primary root tips, flower primordia, intercalary meristems, sub-epidermal regions of young culms and panicles.

Its subcellular location is the nucleus. It is found in the cytoplasm. The protein localises to the cytoskeleton. Its activity is regulated as follows. May be regulated by cyclin-dependent kinase A. Functionally, microtubule-dependent motor protein involved in the control of the oriented deposition of cellulose microfibrils. Involved in wall biogenesis and modification, and contributes to cell-cycle progression and cell division. Acts as a transcriptional activator in gibberellic acid (GA) biosynthesis pathway. Binds specifically to the DNA sequence 5'-ACCAACTTGAA-3' of the ent-kaurene oxidase 2 (CYP701A6 or OsKO2) promoter. May regulate CYP701A6 gene expression and mediates cell elongation by regulating the GA biosynthesis pathway. The chain is Kinesin-like protein KIN-4A from Oryza sativa subsp. japonica (Rice).